Here is a 203-residue protein sequence, read N- to C-terminus: uncharacterized protein (203 aa).

Positions 1–31 are cleaved as a signal peptide; that stretch reads MKKTFVKKAMLTTAAMTSAALLTFGPDAASA.

This is an uncharacterized protein from Bacillus subtilis (strain 168).